Here is a 588-residue protein sequence, read N- to C-terminus: Ribonuclease Y (588 aa).

A helical transmembrane segment spans residues 7–27; that stretch reads VLLVAVLLLALIVLGAVLVGV. Residues 130-162 are disordered; that stretch reads ARRSGEREAAVLATTTREQAAEVERRAARMDDR. The segment covering 148 to 162 has biased composition (basic and acidic residues); that stretch reads QAAEVERRAARMDDR. One can recognise a KH domain in the interval 278-359; sequence VVSVLHLPGD…HRIEEVHDLA (82 aa). Residues 404-497 enclose the HD domain; it reads VLKHLVETAH…TQASDACSGG (94 aa).

Belongs to the RNase Y family.

It localises to the cell membrane. In terms of biological role, endoribonuclease that initiates mRNA decay. The polypeptide is Ribonuclease Y (Salinispora arenicola (strain CNS-205)).